Reading from the N-terminus, the 107-residue chain is Urease subunit beta (107 aa).

It belongs to the urease beta subunit family. As to quaternary structure, heterotrimer of UreA (gamma), UreB (beta) and UreC (alpha) subunits. Three heterotrimers associate to form the active enzyme.

The protein resides in the cytoplasm. The enzyme catalyses urea + 2 H2O + H(+) = hydrogencarbonate + 2 NH4(+). The protein operates within nitrogen metabolism; urea degradation; CO(2) and NH(3) from urea (urease route): step 1/1. The chain is Urease subunit beta from Escherichia coli.